Consider the following 130-residue polypeptide: Lipoprotein LpqS (130 aa).

Positions 1-23 (MVWMRSAIVAVALGVTVAAVAAA) are cleaved as a signal peptide. Cysteine 24 carries the N-palmitoyl cysteine lipid modification. The S-diacylglycerol cysteine moiety is linked to residue cysteine 24.

The protein resides in the cell membrane. May play an essential role in M.tuberculosis replication and survival inside the host cell. This chain is Lipoprotein LpqS, found in Mycobacterium tuberculosis (strain ATCC 25618 / H37Rv).